A 401-amino-acid polypeptide reads, in one-letter code: Argininosuccinate synthase (401 aa).

Position 8–16 (8–16 (AYSGGLDTS)) interacts with ATP. Y85 contributes to the L-citrulline binding site. An ATP-binding site is contributed by G115. L-aspartate contacts are provided by T117, N121, and D122. N121 provides a ligand contact to L-citrulline. The L-citrulline site is built by R125, S173, E258, and Y270.

It belongs to the argininosuccinate synthase family. Type 1 subfamily. In terms of assembly, homotetramer.

It is found in the cytoplasm. The catalysed reaction is L-citrulline + L-aspartate + ATP = 2-(N(omega)-L-arginino)succinate + AMP + diphosphate + H(+). The protein operates within amino-acid biosynthesis; L-arginine biosynthesis; L-arginine from L-ornithine and carbamoyl phosphate: step 2/3. The chain is Argininosuccinate synthase from Staphylococcus aureus (strain bovine RF122 / ET3-1).